A 119-amino-acid polypeptide reads, in one-letter code: Large ribosomal subunit protein bL20c (119 aa).

This sequence belongs to the bacterial ribosomal protein bL20 family.

It localises to the plastid. The protein localises to the chloroplast. Functionally, binds directly to 23S ribosomal RNA and is necessary for the in vitro assembly process of the 50S ribosomal subunit. It is not involved in the protein synthesizing functions of that subunit. The chain is Large ribosomal subunit protein bL20c (rpl20) from Pinus thunbergii (Japanese black pine).